The following is a 201-amino-acid chain: Recombination protein RecR (201 aa).

The segment at 57-72 (CRYCRNLSDAEVCLLC) adopts a C4-type zinc-finger fold. The 96-residue stretch at 80–175 (QQICVVETPA…QATRLAYGVP (96 aa)) folds into the Toprim domain.

The protein belongs to the RecR family.

May play a role in DNA repair. It seems to be involved in an RecBC-independent recombinational process of DNA repair. It may act with RecF and RecO. The chain is Recombination protein RecR from Dichelobacter nodosus (strain VCS1703A).